We begin with the raw amino-acid sequence, 235 residues long: Ubiquinone biosynthesis O-methyltransferase (235 aa).

4 residues coordinate S-adenosyl-L-methionine: R39, G59, D80, and M124.

The protein belongs to the methyltransferase superfamily. UbiG/COQ3 family.

The catalysed reaction is a 3-demethylubiquinol + S-adenosyl-L-methionine = a ubiquinol + S-adenosyl-L-homocysteine + H(+). The enzyme catalyses a 3-(all-trans-polyprenyl)benzene-1,2-diol + S-adenosyl-L-methionine = a 2-methoxy-6-(all-trans-polyprenyl)phenol + S-adenosyl-L-homocysteine + H(+). Its pathway is cofactor biosynthesis; ubiquinone biosynthesis. Its function is as follows. O-methyltransferase that catalyzes the 2 O-methylation steps in the ubiquinone biosynthetic pathway. This is Ubiquinone biosynthesis O-methyltransferase from Vibrio campbellii (strain ATCC BAA-1116).